A 103-amino-acid polypeptide reads, in one-letter code: Potassium voltage-gated channel subfamily E member 3 (103 aa).

Residues Asn5, Asn22, and Asn41 are each glycosylated (N-linked (GlcNAc...) asparagine). Positions 32 to 53 (RPGPGLGPDNQTEERRASLPGR) are disordered. Residues 43–53 (TEERRASLPGR) show a composition bias toward basic and acidic residues. Residues 57–77 (SYMYILFVMFLFAVTVGSLIL) traverse the membrane as a helical segment. Positions 68-79 (FAVTVGSLILGY) are interaction with KCNQ1. The Cytoplasmic segment spans residues 78–103 (GYTRSRKVDKRSDPYHVYIKNRVSMI).

Belongs to the potassium channel KCNE family. In terms of assembly, interacts with KCNB1. Interacts with KCNC2. Associates with KCNC4/Kv3.4. Interacts with KCNQ1; associates with a KCNQ1:KCNE3 stoichiometry of 4:4; produces a current with nearly instantaneous activation with a linear current-voltage relationship and alters membrane raft localization; affects KCNQ1 structure and gating properties. Expressed in hippocampal neurons (at protein level). Widely expressed with highest levels in kidney and moderate levels in small intestine.

The protein resides in the cell membrane. It localises to the cytoplasm. Its subcellular location is the perikaryon. It is found in the cell projection. The protein localises to the dendrite. The protein resides in the membrane raft. In terms of biological role, ancillary protein that functions as a regulatory subunit of the voltage-gated potassium (Kv) channel complex composed of pore-forming and potassium-conducting alpha subunits and of regulatory beta subunits. KCNE3 beta subunit modulates the gating kinetics and enhances stability of the channel complex. Alters the gating of the delayed rectifier Kv channel containing KCNB1 alpha subunit. Associates with KCNC4/Kv3.4 alpha subunit to form the subthreshold Kv channel in skeletal muscle and to establish the resting membrane potential (RMP) in muscle cells. Association with KCNQ1/KCLQT1 alpha subunit may form the intestinal cAMP-stimulated potassium channel involved in chloride secretion that produces a current with nearly instantaneous activation with a linear current-voltage relationship. The protein is Potassium voltage-gated channel subfamily E member 3 of Homo sapiens (Human).